The sequence spans 162 residues: Ribosomal RNA large subunit methyltransferase H (162 aa).

2 residues coordinate S-adenosyl-L-methionine: leucine 78 and glycine 110.

The protein belongs to the RNA methyltransferase RlmH family. Homodimer.

Its subcellular location is the cytoplasm. It carries out the reaction pseudouridine(1915) in 23S rRNA + S-adenosyl-L-methionine = N(3)-methylpseudouridine(1915) in 23S rRNA + S-adenosyl-L-homocysteine + H(+). In terms of biological role, specifically methylates the pseudouridine at position 1915 (m3Psi1915) in 23S rRNA. The protein is Ribosomal RNA large subunit methyltransferase H of Bradyrhizobium sp. (strain ORS 278).